The following is a 586-amino-acid chain: Arrestin-related trafficking adapter 5 (586 aa).

Disordered stretches follow at residues 123–145 (GENAENQHNSSSGRSTSNQDMDT) and 182–217 (ENGVTGTPFEGLRENARSRSSSSNTLNNNSHSYSNR). Residues 126–145 (AENQHNSSSGRSTSNQDMDT) show a composition bias toward polar residues. Residues 199 to 216 (SRSSSSNTLNNNSHSYSN) show a composition bias toward low complexity. Residue Lys-364 forms a Glycyl lysine isopeptide (Lys-Gly) (interchain with G-Cter in ubiquitin) linkage.

Belongs to the arrestin family. Interacts with RSP5. Post-translationally, ubiquitinated by RSP5.

Its function is as follows. May regulate endocytosis by recruiting RSP5 ubiquitin ligase activity to specific plasma membrane proteins in response to extracellular stimuli. The sequence is that of Arrestin-related trafficking adapter 5 (ART5) from Saccharomyces cerevisiae (strain ATCC 204508 / S288c) (Baker's yeast).